The primary structure comprises 856 residues: MVNTPVPGLGSCASRGLIAAPASIIRSRPGCDHAGECIVVCVGVFRKDWVMTSPKQRPPLVPGVAQTFPVLPLRDIVVFPHMIVPLFVGREKSIRALEEVMRGDTYILLATQENASDDDPATDAIYRVGTLATVLQLLKLPDGTVKVLVEGVTRAQVVQYTDRADLYEAEAISLPDEVGDVVEAEALARSVVNEFENYVKLNKKVSPEVVGVVGQIEDHAKLADTIASHLAVKIPEKQAVLETVKVADRLEKVLGLMESEISVLQVEKRIRTRVKRQMEKTQREYYLNEQMKAIQKELGDEDGRDDLQELEDRIKRTKLTKEAREKATHELKKLRQMSPMSAEATVVRNYLDWLLSIPWGIKSKVKKDLPFAQSVLDSDHYGLDKVKERIVEYLAVQSRANKLAGPILCLVGPPGVGKTSLGRSIAKATGREFVRVSLGGVRDEAEIRGHRRTYIGSMPGKIIQSMRKAKKSNPLFLLDEIDKMGADFRGDPSAALLEVLDPEQNPTFNDHYLEVDYDLSNVMFVTTANTLNIPPALLDRMEVIRIAGYTEDEKAEISRKHLIPNALQKHGLSAKEWSIDDAALLQVIRRYTREAGVRNLEREISTLARKAVKELVISKKKSVKVTAKNLETFLGVPRFRYGEIEREDQVGVVTGLAWTEVGGELLTIEGVMMPGKGRMTVTGNLKEVMKESISAAASYVRSRSVDFGIEPPLFERRDIHVHVPEGATPKDGPSAGVAMATTIVSVLTGIPVRRDVAMTGEITLRGRVLPIGGLKEKLLAALRGGIKKVLIPEENAKDLADIPDNVKNALEIIPVSRMDEVLHHALLRHPEPISWTEQPVSGAVVPDEDAAGVVAH.

The 194-residue stretch at 68-261 (FPVLPLRDIV…KVLGLMESEI (194 aa)) folds into the Lon N-terminal domain. Position 412 to 419 (412 to 419 (GPPGVGKT)) interacts with ATP. The Lon proteolytic domain occupies 647–828 (EDQVGVVTGL…DEVLHHALLR (182 aa)). Catalysis depends on residues Ser734 and Lys777.

This sequence belongs to the peptidase S16 family. In terms of assembly, homohexamer. Organized in a ring with a central cavity.

The protein resides in the cytoplasm. It catalyses the reaction Hydrolysis of proteins in presence of ATP.. Its function is as follows. ATP-dependent serine protease that mediates the selective degradation of mutant and abnormal proteins as well as certain short-lived regulatory proteins. Required for cellular homeostasis and for survival from DNA damage and developmental changes induced by stress. Degrades polypeptides processively to yield small peptide fragments that are 5 to 10 amino acids long. Binds to DNA in a double-stranded, site-specific manner. The protein is Lon protease of Azorhizobium caulinodans (strain ATCC 43989 / DSM 5975 / JCM 20966 / LMG 6465 / NBRC 14845 / NCIMB 13405 / ORS 571).